Here is a 212-residue protein sequence, read N- to C-terminus: MEKFMLGRKIGMTQVFDEDGLLIPVTVIEAGPITVVQKKKPETDGYNSVRVAFGDVQEKRLNKPEKGLFAKLGIAPKKYIREFRVDDPDKYELKQEIKVEEMFQPGDRVDVTGISKGKGFAGVIKRFGNRRGKETHGSMYHRRVGSMGANTNPARVFKGKKLPGHMGVERVTVQNLDVVKVDAERNLMLVKGAVPGAKGGLLMIKDTVKARK.

It belongs to the universal ribosomal protein uL3 family. Part of the 50S ribosomal subunit. Forms a cluster with proteins L14 and L19.

Functionally, one of the primary rRNA binding proteins, it binds directly near the 3'-end of the 23S rRNA, where it nucleates assembly of the 50S subunit. The polypeptide is Large ribosomal subunit protein uL3 (Acetivibrio thermocellus (strain ATCC 27405 / DSM 1237 / JCM 9322 / NBRC 103400 / NCIMB 10682 / NRRL B-4536 / VPI 7372) (Clostridium thermocellum)).